The sequence spans 1337 residues: Protein cordon-bleu (1337 aa).

The disordered stretch occupies residues methionine 1–histidine 41. Phosphoserine occurs at positions 47, 50, 212, 235, 272, and 294. Disordered regions lie at residues serine 260–glutamate 556 and isoleucine 647–glutamine 768. Over residues cysteine 288–serine 317 the composition is skewed to polar residues. The KKRRAP 1 signature appears at lysine 323–proline 328. Residues serine 346 and serine 349 each carry the phosphoserine modification. A KKRRAP 2 motif is present at residues lysine 356–proline 361. Residues proline 361 to valine 374 show a composition bias toward pro residues. At serine 372 the chain carries Phosphoserine. The span at asparagine 377–lysine 387 shows a compositional bias: basic and acidic residues. The span at leucine 411–aspartate 423 shows a compositional bias: pro residues. Residues glutamate 469 to glutamate 480 are compositionally biased toward acidic residues. The segment covering valine 484–serine 500 has biased composition (polar residues). Threonine 522 carries the phosphothreonine modification. Over residues glycine 526 to serine 541 the composition is skewed to low complexity. 2 stretches are compositionally biased toward polar residues: residues isoleucine 647 to valine 666 and glutamine 687 to valine 710. Position 649 is a phosphoserine (serine 649). Basic and acidic residues predominate over residues leucine 714–glutamine 736. Serine 816 is modified (phosphoserine). Disordered regions lie at residues threonine 892–valine 923 and lysine 967–alanine 991. Serine 1038 carries the post-translational modification Phosphoserine. A compositionally biased stretch (polar residues) spans glycine 1070–glutamine 1090. Disordered stretches follow at residues glycine 1070–lysine 1094, methionine 1113–threonine 1133, lysine 1145–lysine 1168, and alanine 1192–glutamate 1221. Serine 1128 carries the post-translational modification Phosphoserine. WH2 domains are found at residues leucine 1185–threonine 1205 and glutamate 1225–valine 1245. Basic and acidic residues predominate over residues glycine 1197 to proline 1214. A disordered region spans residues glycine 1262 to serine 1310. Positions leucine 1276–glutamine 1291 are enriched in pro residues. Residues valine 1297 to serine 1310 are compositionally biased toward polar residues. Serine 1303 is modified (phosphoserine). The WH2 3 domain maps to alanine 1313 to valine 1333.

Identified in a complex composed of COBL, PACSIN1 and WASL. Interacts with PACSIN1, PACSIN2 and PACSIN3. Identified in a complex composed of ACTA1, COBL, GSN and TMSB4X. Interacts (via WH2 domains) with actin monomers. Interacts with DBNL. Detected in brain cortex and in the Purkinje cell layer in the cerebellum. Detected in hippocampus neurons, and at lower levels in testis, lung and spleen (at protein level). Detected in embryonic neural tube.

It localises to the cell membrane. The protein resides in the cytoplasm. It is found in the cytoskeleton. The protein localises to the cell projection. Its subcellular location is the ruffle. Its function is as follows. Plays an important role in the reorganization of the actin cytoskeleton. Binds to and sequesters actin monomers (G actin). Nucleates actin polymerization by assembling three actin monomers in cross-filament orientation and thereby promotes growth of actin filaments at the barbed end. Can also mediate actin depolymerization at barbed ends and severing of actin filaments. Promotes formation of cell ruffles. Regulates neuron morphogenesis and increases branching of axons and dendrites. Regulates dendrite branching in Purkinje cells. The protein is Protein cordon-bleu (Cobl) of Mus musculus (Mouse).